Here is a 402-residue protein sequence, read N- to C-terminus: 5-methylphenazine-1-carboxylate 1-monooxygenase (402 aa).

Residues 14–15 (IG), 35–36 (ES), 43–45 (LGV), Arg106, Val132, Arg191, and Asp310 each bind FAD. Basic and acidic residues predominate over residues 368 to 385 (REKEEWAAASRPKTEKSA). The disordered stretch occupies residues 368–402 (REKEEWAAASRPKTEKSAALEAITGSYRNQVERPR).

In terms of assembly, monomer in solution. Probably interacts transiently with PhzM. FAD serves as cofactor.

The enzyme catalyses 5-methyl-phenazine-1-carboxylate + NADH + O2 + 2 H(+) = pyocyanin + CO2 + NAD(+) + H2O. It functions in the pathway secondary metabolite biosynthesis; pyocyanine biosynthesis. Its function is as follows. Involved in the biosynthesis of pyocyanine, a blue-pigmented phenazine derivative, which plays a role in virulence. Catalyzes the oxidative decarboxylation of 5-methylphenazine-1-carboxylate (5-methyl-PCA) to pyocyanine. Can also act on phenazine-1-carboxylate (PCA), converting it into 1-hydroxyphenazine (1-HP). However, PCA is a poor substrate. This chain is 5-methylphenazine-1-carboxylate 1-monooxygenase, found in Pseudomonas aeruginosa (strain ATCC 15692 / DSM 22644 / CIP 104116 / JCM 14847 / LMG 12228 / 1C / PRS 101 / PAO1).